Consider the following 887-residue polypeptide: Alanine--tRNA ligase (887 aa).

Positions 579, 583, 681, and 685 each coordinate Zn(2+).

This sequence belongs to the class-II aminoacyl-tRNA synthetase family. Requires Zn(2+) as cofactor.

It is found in the cytoplasm. It carries out the reaction tRNA(Ala) + L-alanine + ATP = L-alanyl-tRNA(Ala) + AMP + diphosphate. Functionally, catalyzes the attachment of alanine to tRNA(Ala) in a two-step reaction: alanine is first activated by ATP to form Ala-AMP and then transferred to the acceptor end of tRNA(Ala). Also edits incorrectly charged Ser-tRNA(Ala) and Gly-tRNA(Ala) via its editing domain. The sequence is that of Alanine--tRNA ligase from Flavobacterium psychrophilum (strain ATCC 49511 / DSM 21280 / CIP 103535 / JIP02/86).